Here is a 109-residue protein sequence, read N- to C-terminus: T-cell surface glycoprotein CD1b (109 aa).

An N-terminal signal peptide occupies residues 1-18 (MLLLPLLLLAGRFPGGDN). Residues asparagine 38 and asparagine 75 are each glycosylated (N-linked (GlcNAc...) asparagine).

As to quaternary structure, heterodimer with B2M (beta-2-microglobulin). Interacts with saposin C. As to expression, expressed on cortical thymocytes, on certain T-cell leukemias, and in various other tissues.

The protein resides in the cell membrane. Its subcellular location is the endosome membrane. It localises to the lysosome membrane. Its function is as follows. Antigen-presenting protein that binds self and non-self lipid and glycolipid antigens and presents them to T-cell receptors on natural killer T-cells. The protein is T-cell surface glycoprotein CD1b (CD1B) of Oryctolagus cuniculus (Rabbit).